A 709-amino-acid chain; its full sequence is Polyribonucleotide nucleotidyltransferase (709 aa).

The Mg(2+) site is built by Asp485 and Asp491. A KH domain is found at 552–611; that stretch reads PRIYTMKIDPKKIKDVIGKGGATIRSLTEETGTSIDIDDDGTVKIAAVDSNAAKNVMGRI. The 69-residue stretch at 621–689 folds into the S1 motif domain; the sequence is GAIYKGKVTR…RQGRIRLTMK (69 aa).

Belongs to the polyribonucleotide nucleotidyltransferase family. Component of the RNA degradosome, which is a multiprotein complex involved in RNA processing and mRNA degradation. It depends on Mg(2+) as a cofactor.

The protein localises to the cytoplasm. It catalyses the reaction RNA(n+1) + phosphate = RNA(n) + a ribonucleoside 5'-diphosphate. Its function is as follows. Involved in mRNA degradation. Catalyzes the phosphorolysis of single-stranded polyribonucleotides processively in the 3'- to 5'-direction. This chain is Polyribonucleotide nucleotidyltransferase, found in Haemophilus influenzae (strain 86-028NP).